A 49-amino-acid polypeptide reads, in one-letter code: Osteocalcin (49 aa).

In terms of domain architecture, Gla spans 1–47 (YLYQWLGAPAPYPDPLEPKREVCELNPDCDELADHIGFQEAYRRFYG). Pro9 is subject to 4-hydroxyproline. Glu17, Glu21, Glu24, and Asp30 together coordinate Ca(2+). Residues Glu17, Glu21, and Glu24 each carry the 4-carboxyglutamate modification. Cys23 and Cys29 are joined by a disulfide.

The protein belongs to the osteocalcin/matrix Gla protein family. Gamma-carboxyglutamate residues are formed by vitamin K dependent carboxylation by GGCX. These residues are essential for the binding of calcium. Decarboxylation promotes the hormone activity.

The protein resides in the secreted. Functionally, the carboxylated form is one of the main organic components of the bone matrix, which constitutes 1-2% of the total bone protein: it acts as a negative regulator of bone formation and is required to limit bone formation without impairing bone resorption or mineralization. The carboxylated form binds strongly to apatite and calcium. In terms of biological role, the uncarboxylated form acts as a hormone secreted by osteoblasts, which regulates different cellular processes, such as energy metabolism, male fertility and brain development. Regulates of energy metabolism by acting as a hormone favoring pancreatic beta-cell proliferation, insulin secretion and sensitivity and energy expenditure. Uncarboxylated osteocalcin hormone also promotes testosterone production in the testes: acts as a ligand for G protein-coupled receptor GPRC6A at the surface of Leydig cells, initiating a signaling response that promotes the expression of enzymes required for testosterone synthesis in a CREB-dependent manner. Also acts as a regulator of brain development: osteocalcin hormone crosses the blood-brain barrier and acts as a ligand for GPR158 on neurons, initiating a signaling response that prevents neuronal apoptosis in the hippocampus, favors the synthesis of all monoamine neurotransmitters and inhibits that of gamma-aminobutyric acid (GABA). Osteocalcin also crosses the placenta during pregnancy and maternal osteocalcin is required for fetal brain development. This is Osteocalcin (BGLAP) from Macaca fascicularis (Crab-eating macaque).